We begin with the raw amino-acid sequence, 153 residues long: Prostaglandin E synthase (153 aa).

Residues Met-1–Val-13 lie on the Lumenal side of the membrane. The chain crosses the membrane as a helical span at residues Leu-14 to Lys-42. Residue Arg-39 participates in glutathione binding. Residues Lys-43–Arg-61 lie on the Cytoplasmic side of the membrane. A helical transmembrane segment spans residues Ser-62 to Ser-91. Arg-74 to Glu-78 provides a ligand contact to glutathione. At Phe-92 to Leu-98 the chain is on the lumenal side. A helical transmembrane segment spans residues Ile-99–Gly-120. The glutathione site is built by His-114 and Tyr-118. The Cytoplasmic portion of the chain corresponds to Lys-121–Pro-124. The helical transmembrane segment at Arg-125 to Leu-153 threads the bilayer. A glutathione-binding site is contributed by Arg-127–Tyr-131.

It belongs to the MAPEG family. Glutathione is required as a cofactor.

The protein resides in the membrane. The protein localises to the cytoplasm. It is found in the perinuclear region. The catalysed reaction is prostaglandin H2 = prostaglandin E2. The enzyme catalyses 2-glyceryl-prostaglandin H2 = 2-glyceryl-prostaglandin E2. It catalyses the reaction prostaglandin G2 = (15S)-15-hydroperoxy-prostaglandin E2. It carries out the reaction 1-chloro-2,4-dinitrobenzene + glutathione = 2,4-dinitrophenyl-S-glutathione + chloride + H(+). The catalysed reaction is (5S)-hydroperoxy-(6E,8Z,11Z,14Z)-eicosatetraenoate + 2 glutathione = (5S)-hydroxy-(6E,8Z,11Z,14Z)-eicosatetraenoate + glutathione disulfide + H2O. The protein operates within lipid metabolism; prostaglandin biosynthesis. Activity is increased following LPS stimulation and down-regulated by the anti-inflammatory glucocorticoid dexamethasone. Its function is as follows. Terminal enzyme of the cyclooxygenase (COX)-2-mediated prostaglandin E2 (PGE2) biosynthetic pathway. Catalyzes the glutathione-dependent oxidoreduction of prostaglandin endoperoxide H2 (PGH2) to prostaglandin E2 (PGE2) in response to inflammatory stimuli. Plays a key role in inflammation response, fever and pain. Also catalyzes the oxidoreduction of endocannabinoids into prostaglandin glycerol esters and PGG2 into 15-hydroperoxy-PGE2. In addition, displays low glutathione transferase and glutathione-dependent peroxidase activities, toward 1-chloro-2,4-dinitrobenzene and 5-hydroperoxyicosatetraenoic acid (5-HPETE), respectively. In Rattus norvegicus (Rat), this protein is Prostaglandin E synthase (Ptges).